The chain runs to 229 residues: Peptidase E (229 aa).

Catalysis depends on charge relay system residues Ser120, Asp135, and His157.

Belongs to the peptidase S51 family.

It localises to the cytoplasm. It catalyses the reaction Dipeptidase E catalyzes the hydrolysis of dipeptides Asp-|-Xaa. It does not act on peptides with N-terminal Glu, Asn or Gln, nor does it cleave isoaspartyl peptides.. Its function is as follows. Hydrolyzes dipeptides containing N-terminal aspartate residues. May play a role in allowing the cell to use peptide aspartate to spare carbon otherwise required for the synthesis of the aspartate family of amino acids. In Citrobacter koseri (strain ATCC BAA-895 / CDC 4225-83 / SGSC4696), this protein is Peptidase E.